A 232-amino-acid chain; its full sequence is Large ribosomal subunit protein uL1 (232 aa).

Belongs to the universal ribosomal protein uL1 family. In terms of assembly, part of the 50S ribosomal subunit.

Binds directly to 23S rRNA. The L1 stalk is quite mobile in the ribosome, and is involved in E site tRNA release. Functionally, protein L1 is also a translational repressor protein, it controls the translation of the L11 operon by binding to its mRNA. This is Large ribosomal subunit protein uL1 from Sinorhizobium medicae (strain WSM419) (Ensifer medicae).